A 222-amino-acid chain; its full sequence is Pyridoxine/pyridoxamine 5'-phosphate oxidase (222 aa).

Residues 16 to 19 (RVSY) and lysine 75 contribute to the substrate site. FMN-binding positions include 70 to 75 (RTVLCK), 85 to 86 (FT), lysine 92, and glutamine 114. Substrate is bound by residues tyrosine 132, arginine 136, and serine 140. Residues 149–150 (QS) and tryptophan 195 each bind FMN. Position 201-203 (201-203 (RLH)) interacts with substrate. Arginine 205 contacts FMN.

The protein belongs to the pyridoxamine 5'-phosphate oxidase family. As to quaternary structure, homodimer. Requires FMN as cofactor.

It catalyses the reaction pyridoxamine 5'-phosphate + O2 + H2O = pyridoxal 5'-phosphate + H2O2 + NH4(+). It carries out the reaction pyridoxine 5'-phosphate + O2 = pyridoxal 5'-phosphate + H2O2. The protein operates within cofactor metabolism; pyridoxal 5'-phosphate salvage; pyridoxal 5'-phosphate from pyridoxamine 5'-phosphate: step 1/1. It participates in cofactor metabolism; pyridoxal 5'-phosphate salvage; pyridoxal 5'-phosphate from pyridoxine 5'-phosphate: step 1/1. Functionally, catalyzes the oxidation of either pyridoxine 5'-phosphate (PNP) or pyridoxamine 5'-phosphate (PMP) into pyridoxal 5'-phosphate (PLP). The chain is Pyridoxine/pyridoxamine 5'-phosphate oxidase from Saccharopolyspora erythraea (strain ATCC 11635 / DSM 40517 / JCM 4748 / NBRC 13426 / NCIMB 8594 / NRRL 2338).